Consider the following 210-residue polypeptide: Probable nicotinate-nucleotide adenylyltransferase (210 aa).

Belongs to the NadD family.

It catalyses the reaction nicotinate beta-D-ribonucleotide + ATP + H(+) = deamido-NAD(+) + diphosphate. The protein operates within cofactor biosynthesis; NAD(+) biosynthesis; deamido-NAD(+) from nicotinate D-ribonucleotide: step 1/1. Catalyzes the reversible adenylation of nicotinate mononucleotide (NaMN) to nicotinic acid adenine dinucleotide (NaAD). This is Probable nicotinate-nucleotide adenylyltransferase from Streptococcus mutans serotype c (strain ATCC 700610 / UA159).